A 111-amino-acid chain; its full sequence is MASAVLSASRVSRPLGRALPGLRRPMSSGAHGEEGSARMWKALTYFVALPGVGVSMLNVFLKSRHEEHERPPFVAYPHLRIRTKPFPWGDGNHTLFHNPHVNPLPTGYEDE.

A mitochondrion-targeting transit peptide spans 1 to 26 (MASAVLSASRVSRPLGRALPGLRRPM). Residues 27 to 36 (SSGAHGEEGS) are Mitochondrial matrix-facing. Residues 37–61 (ARMWKALTYFVALPGVGVSMLNVFL) traverse the membrane as a helical segment. Over 62 to 111 (KSRHEEHERPPFVAYPHLRIRTKPFPWGDGNHTLFHNPHVNPLPTGYEDE) the chain is Mitochondrial intermembrane.

This sequence belongs to the cytochrome c oxidase subunit 6A family. In terms of assembly, component of the cytochrome c oxidase (complex IV, CIV), a multisubunit enzyme composed of 14 subunits. The complex is composed of a catalytic core of 3 subunits MT-CO1, MT-CO2 and MT-CO3, encoded in the mitochondrial DNA, and 11 supernumerary subunits COX4I, COX5A, COX5B, COX6A, COX6B, COX6C, COX7A, COX7B, COX7C, COX8 and NDUFA4, which are encoded in the nuclear genome. The complex exists as a monomer or a dimer and forms supercomplexes (SCs) in the inner mitochondrial membrane with NADH-ubiquinone oxidoreductase (complex I, CI) and ubiquinol-cytochrome c oxidoreductase (cytochrome b-c1 complex, complex III, CIII), resulting in different assemblies (supercomplex SCI(1)III(2)IV(1) and megacomplex MCI(2)III(2)IV(2)).

It is found in the mitochondrion inner membrane. Its pathway is energy metabolism; oxidative phosphorylation. Functionally, component of the cytochrome c oxidase, the last enzyme in the mitochondrial electron transport chain which drives oxidative phosphorylation. The respiratory chain contains 3 multisubunit complexes succinate dehydrogenase (complex II, CII), ubiquinol-cytochrome c oxidoreductase (cytochrome b-c1 complex, complex III, CIII) and cytochrome c oxidase (complex IV, CIV), that cooperate to transfer electrons derived from NADH and succinate to molecular oxygen, creating an electrochemical gradient over the inner membrane that drives transmembrane transport and the ATP synthase. Cytochrome c oxidase is the component of the respiratory chain that catalyzes the reduction of oxygen to water. Electrons originating from reduced cytochrome c in the intermembrane space (IMS) are transferred via the dinuclear copper A center (CU(A)) of subunit 2 and heme A of subunit 1 to the active site in subunit 1, a binuclear center (BNC) formed by heme A3 and copper B (CU(B)). The BNC reduces molecular oxygen to 2 water molecules unsing 4 electrons from cytochrome c in the IMS and 4 protons from the mitochondrial matrix. The chain is Cytochrome c oxidase subunit 6A1, mitochondrial (Cox6a1) from Mus musculus (Mouse).